The primary structure comprises 341 residues: Elongation factor Ts (341 aa).

Residues 80 to 83 (TDFV) are involved in Mg(2+) ion dislocation from EF-Tu.

Belongs to the EF-Ts family.

It localises to the cytoplasm. Its function is as follows. Associates with the EF-Tu.GDP complex and induces the exchange of GDP to GTP. It remains bound to the aminoacyl-tRNA.EF-Tu.GTP complex up to the GTP hydrolysis stage on the ribosome. The chain is Elongation factor Ts from Lactobacillus johnsonii (strain CNCM I-12250 / La1 / NCC 533).